A 564-amino-acid polypeptide reads, in one-letter code: Probable metalloprotease ARX1 (564 aa).

It belongs to the peptidase M24 family. In terms of assembly, component of the nucleoplasmic and cytoplasmic pre-60S ribosomal particles.

It localises to the cytoplasm. The protein localises to the nucleus. Its function is as follows. Probable metalloprotease involved in proper assembly of pre-ribosomal particles during the biogenesis of the 60S ribosomal subunit. Accompanies the pre-60S particles to the cytoplasm. The sequence is that of Probable metalloprotease ARX1 (ARX1) from Candida albicans (strain SC5314 / ATCC MYA-2876) (Yeast).